The primary structure comprises 363 residues: MSKNYHIAVLPGDGIGPEVMTQALKVLDAVRNRFAMRITTSHYDVGGAAIDNHGQPLPPATVEGCEQADAVLFGSVGGPKWEHLPPDQQPERGALLPLRKHFKLFSNLRPAKLYQGLEAFCPLRADIAANGFDILCVRELTGGIYFGQPKGREGSGQYEKAFDTEVYHRFEIERIARIAFESARKRRHKVTSIDKANVLQSSILWREIVNEIATEYPDIELAHMYIDNATMQLIKDPSQFDVLLCSNLFGDILSDECAMITGSMGMLPSASLNEQGFGLYEPAGGSAPDIAGKNIANPIAQILSLALLLRYSLDADDAASAIERAINRALEEGIRTGDLARGAAAVSTDEMGDIIARYVAEGV.

78 to 91 (GPKWEHLPPDQQPE) contacts NAD(+). Residues arginine 99, arginine 109, arginine 138, and aspartate 227 each coordinate substrate. Mg(2+)-binding residues include aspartate 227, aspartate 251, and aspartate 255. 285–297 (GSAPDIAGKNIAN) is a binding site for NAD(+).

Belongs to the isocitrate and isopropylmalate dehydrogenases family. LeuB type 1 subfamily. In terms of assembly, homodimer. Requires Mg(2+) as cofactor. Mn(2+) is required as a cofactor.

The protein resides in the cytoplasm. It catalyses the reaction (2R,3S)-3-isopropylmalate + NAD(+) = 4-methyl-2-oxopentanoate + CO2 + NADH. It functions in the pathway amino-acid biosynthesis; L-leucine biosynthesis; L-leucine from 3-methyl-2-oxobutanoate: step 3/4. In terms of biological role, catalyzes the oxidation of 3-carboxy-2-hydroxy-4-methylpentanoate (3-isopropylmalate) to 3-carboxy-4-methyl-2-oxopentanoate. The product decarboxylates to 4-methyl-2 oxopentanoate. The protein is 3-isopropylmalate dehydrogenase of Escherichia coli O157:H7.